The primary structure comprises 124 residues: Small ribosomal subunit protein uS12 (124 aa).

At D89 the chain carries 3-methylthioaspartic acid.

This sequence belongs to the universal ribosomal protein uS12 family. Part of the 30S ribosomal subunit. Contacts proteins S8 and S17. May interact with IF1 in the 30S initiation complex.

With S4 and S5 plays an important role in translational accuracy. Functionally, interacts with and stabilizes bases of the 16S rRNA that are involved in tRNA selection in the A site and with the mRNA backbone. Located at the interface of the 30S and 50S subunits, it traverses the body of the 30S subunit contacting proteins on the other side and probably holding the rRNA structure together. The combined cluster of proteins S8, S12 and S17 appears to hold together the shoulder and platform of the 30S subunit. In Klebsiella pneumoniae (strain 342), this protein is Small ribosomal subunit protein uS12.